Consider the following 200-residue polypeptide: Peptidyl-tRNA hydrolase (200 aa).

TRNA is bound at residue Tyr14. The Proton acceptor role is filled by His19. Phe64, Asn66, and Asn112 together coordinate tRNA.

It belongs to the PTH family. In terms of assembly, monomer.

It is found in the cytoplasm. It catalyses the reaction an N-acyl-L-alpha-aminoacyl-tRNA + H2O = an N-acyl-L-amino acid + a tRNA + H(+). Hydrolyzes ribosome-free peptidyl-tRNAs (with 1 or more amino acids incorporated), which drop off the ribosome during protein synthesis, or as a result of ribosome stalling. In terms of biological role, catalyzes the release of premature peptidyl moieties from peptidyl-tRNA molecules trapped in stalled 50S ribosomal subunits, and thus maintains levels of free tRNAs and 50S ribosomes. The sequence is that of Peptidyl-tRNA hydrolase from Maricaulis maris (strain MCS10) (Caulobacter maris).